A 231-amino-acid chain; its full sequence is Probable amino-acid ABC transporter permease protein y4tG (231 aa).

Transmembrane regions (helical) follow at residues 9 to 29, 32 to 52, 64 to 84, 86 to 106, 161 to 181, and 196 to 216; these read TGNG…MGLI, LQAA…FAVL, AAVL…FFLY, VLPE…ALGI, YLVS…VEML, and VPLS…SALV. Residues 28–217 enclose the ABC transmembrane type-1 domain; the sequence is LITTLQAAFL…LTIVASALVR (190 aa).

It belongs to the binding-protein-dependent transport system permease family. HisMQ subfamily.

Its subcellular location is the cell inner membrane. In terms of biological role, probably part of the binding-protein-dependent transport system y4tEFGH for an amino acid. Probably responsible for the translocation of the substrate across the membrane. The sequence is that of Probable amino-acid ABC transporter permease protein y4tG from Sinorhizobium fredii (strain NBRC 101917 / NGR234).